The chain runs to 511 residues: Histidine ammonia-lyase (511 aa).

The 5-imidazolinone (Ala-Gly) cross-link spans 142-144; that stretch reads ASG. Ser143 is subject to 2,3-didehydroalanine (Ser).

It belongs to the PAL/histidase family. Post-translationally, contains an active site 4-methylidene-imidazol-5-one (MIO), which is formed autocatalytically by cyclization and dehydration of residues Ala-Ser-Gly.

The protein localises to the cytoplasm. The enzyme catalyses L-histidine = trans-urocanate + NH4(+). The protein operates within amino-acid degradation; L-histidine degradation into L-glutamate; N-formimidoyl-L-glutamate from L-histidine: step 1/3. This is Histidine ammonia-lyase from Caulobacter sp. (strain K31).